The following is a 315-amino-acid chain: Cytosolic Fe-S cluster assembly factor nubp1-A (315 aa).

The tract at residues 1–23 is disordered; that stretch reads MADIPDNAPQHCPGTDSTEAGKS. 4 residues coordinate [4Fe-4S] cluster: C12, C26, C29, and C35. 66 to 73 is an ATP binding site; the sequence is GKGGVGKS. [4Fe-4S] cluster is bound by residues C239 and C242.

It belongs to the Mrp/NBP35 ATP-binding proteins family. NUBP1/NBP35 subfamily. As to quaternary structure, heterotetramer of 2 nubp1 and 2 nubp2 chains. The cofactor is [4Fe-4S] cluster.

Its subcellular location is the cytoplasm. In terms of biological role, component of the cytosolic iron-sulfur (Fe/S) protein assembly (CIA) machinery. Required for maturation of extramitochondrial Fe-S proteins. The nubp1-nubp2 heterotetramer forms a Fe-S scaffold complex, mediating the de novo assembly of an Fe-S cluster and its transfer to target apoproteins. The sequence is that of Cytosolic Fe-S cluster assembly factor nubp1-A (nubp1-A) from Xenopus laevis (African clawed frog).